Consider the following 98-residue polypeptide: NADH-ubiquinone oxidoreductase chain 4L (98 aa).

3 helical membrane passes run 1–21 (MSLT…GLLM), 29–49 (SLLC…MTIL), and 61–81 (IILL…LVMV).

It belongs to the complex I subunit 4L family. In terms of assembly, core subunit of respiratory chain NADH dehydrogenase (Complex I) which is composed of 45 different subunits.

Its subcellular location is the mitochondrion inner membrane. The catalysed reaction is a ubiquinone + NADH + 5 H(+)(in) = a ubiquinol + NAD(+) + 4 H(+)(out). Core subunit of the mitochondrial membrane respiratory chain NADH dehydrogenase (Complex I) which catalyzes electron transfer from NADH through the respiratory chain, using ubiquinone as an electron acceptor. Part of the enzyme membrane arm which is embedded in the lipid bilayer and involved in proton translocation. This chain is NADH-ubiquinone oxidoreductase chain 4L (MT-ND4L), found in Chiroderma trinitatum (Little big-eyed bat).